The following is a 229-amino-acid chain: Protein GrpE (229 aa).

The segment at 1–89 (MSDFNKDDYL…AEGSSLTPLG (89 aa)) is disordered. Low complexity predominate over residues 24–36 (ASPDADGADAPSD). The segment covering 39 to 50 (EQLKDDMLKDAA) has biased composition (basic and acidic residues). Low complexity predominate over residues 65–84 (KAAAEATADAASDGDAEGSS).

It belongs to the GrpE family. Homodimer.

The protein resides in the cytoplasm. In terms of biological role, participates actively in the response to hyperosmotic and heat shock by preventing the aggregation of stress-denatured proteins, in association with DnaK and GrpE. It is the nucleotide exchange factor for DnaK and may function as a thermosensor. Unfolded proteins bind initially to DnaJ; upon interaction with the DnaJ-bound protein, DnaK hydrolyzes its bound ATP, resulting in the formation of a stable complex. GrpE releases ADP from DnaK; ATP binding to DnaK triggers the release of the substrate protein, thus completing the reaction cycle. Several rounds of ATP-dependent interactions between DnaJ, DnaK and GrpE are required for fully efficient folding. The protein is Protein GrpE of Bifidobacterium animalis subsp. lactis (strain AD011).